We begin with the raw amino-acid sequence, 248 residues long: Probable N-acetylglucosaminyl-phosphatidylinositol de-N-acetylase (248 aa).

Residues 1–7 (MIWFWST) lie on the Lumenal side of the membrane. The chain crosses the membrane as a helical span at residues 8 to 24 (LLVTAIAVLSTANESSS). Topologically, residues 25-248 (GQEKLAVESI…MSNNVLKRAT (224 aa)) are cytoplasmic.

The protein belongs to the PIGL family.

The protein localises to the endoplasmic reticulum membrane. The enzyme catalyses a 6-(N-acetyl-alpha-D-glucosaminyl)-1-(1,2-diacyl-sn-glycero-3-phospho)-1D-myo-inositol + H2O = a 6-(alpha-D-glucosaminyl)-1-(1,2-diacyl-sn-glycero-3-phospho)-1D-myo-inositol + acetate. The protein operates within glycolipid biosynthesis; glycosylphosphatidylinositol-anchor biosynthesis. Functionally, involved in the second step of GPI biosynthesis. De-N-acetylation of N-acetylglucosaminyl-phosphatidylinositol. In Schizosaccharomyces pombe (strain 972 / ATCC 24843) (Fission yeast), this protein is Probable N-acetylglucosaminyl-phosphatidylinositol de-N-acetylase (gpi12).